A 181-amino-acid chain; its full sequence is Adenine phosphoribosyltransferase (181 aa).

This sequence belongs to the purine/pyrimidine phosphoribosyltransferase family. As to quaternary structure, homodimer.

The protein localises to the cytoplasm. The catalysed reaction is AMP + diphosphate = 5-phospho-alpha-D-ribose 1-diphosphate + adenine. The protein operates within purine metabolism; AMP biosynthesis via salvage pathway; AMP from adenine: step 1/1. Catalyzes a salvage reaction resulting in the formation of AMP, that is energically less costly than de novo synthesis. The protein is Adenine phosphoribosyltransferase of Neorhizobium galegae (Rhizobium galegae).